We begin with the raw amino-acid sequence, 185 residues long: MKAVSIEAGEGSKAKRVHGVNRGISVFDLVLRIVALVGTLASAVAMGTADQALSFSTQIVNFEAQYDDIDAFKFFVVSNSITCVYLALSIPISIFHIIRSRAGKSRVLLIVLDAIMLVFLTSGASAAAAIVYLAHNGNTSTNWFSICQQYTDFCQRSAGSLIGSFGAMALMVLLIILSSIALSRR.

Residues 1–25 (MKAVSIEAGEGSKAKRVHGVNRGIS) lie on the Cytoplasmic side of the membrane. A helical membrane pass occupies residues 26 to 46 (VFDLVLRIVALVGTLASAVAM). Over 47-73 (GTADQALSFSTQIVNFEAQYDDIDAFK) the chain is Extracellular. Residues 74-94 (FFVVSNSITCVYLALSIPISI) form a helical membrane-spanning segment. The Cytoplasmic portion of the chain corresponds to 95-106 (FHIIRSRAGKSR). Residues 107–127 (VLLIVLDAIMLVFLTSGASAA) traverse the membrane as a helical segment. Over 128–160 (AAIVYLAHNGNTSTNWFSICQQYTDFCQRSAGS) the chain is Extracellular. N138 carries an N-linked (GlcNAc...) asparagine glycan. Residues 161-181 (LIGSFGAMALMVLLIILSSIA) form a helical membrane-spanning segment. Over 182–185 (LSRR) the chain is Cytoplasmic.

Belongs to the Casparian strip membrane proteins (CASP) family. Homodimer and heterodimers.

The protein localises to the cell membrane. Regulates membrane-cell wall junctions and localized cell wall deposition. Required for establishment of the Casparian strip membrane domain (CSD) and the subsequent formation of Casparian strips, a cell wall modification of the root endodermis that determines an apoplastic barrier between the intraorganismal apoplasm and the extraorganismal apoplasm and prevents lateral diffusion. The sequence is that of Casparian strip membrane protein 2 from Solanum demissum (Wild potato).